The sequence spans 210 residues: uncharacterized protein (210 aa).

Residues Arg4–Val180 form the PfpI endopeptidase domain. The active-site Nucleophile is Cys110.

This sequence belongs to the peptidase C56 family.

This is an uncharacterized protein from Bacillus subtilis (strain 168).